A 232-amino-acid chain; its full sequence is Protein FAM246A (232 aa).

Disordered stretches follow at residues 1–47 (MATP…RAPG), 153–178 (LPPPPPSPPARREPRAVPRATPRGPT), and 191–232 (AASR…GGGD). A compositionally biased stretch (basic and acidic residues) spans 19-31 (EVLRRVTGRRRDP). A compositionally biased stretch (basic residues) spans 211–220 (APVRKNHKKM).

This sequence belongs to the FAM246 family.

This Homo sapiens (Human) protein is Protein FAM246A.